Here is a 313-residue protein sequence, read N- to C-terminus: Formate-nitrite transporter (313 aa).

Residues 1–47 lie on the Cytoplasmic side of the membrane; sequence MPKSNTKYVIDPLSVKTSCSSEESYIRCVEYGKSKAHYSSLILLAKA. A helical membrane pass occupies residues 48 to 68; the sequence is ILAGVFVGVCAHASGIAGGLF. At 69–77 the chain is on the extracellular side; that stretch reads YYHKLREYV. Residues 78 to 98 form a helical membrane-spanning segment; the sequence is GASMSAFVYGFTFPIAFLCII. At 99-128 the chain is on the cytoplasmic side; sequence CTGSDLFTGNTLAVTTALLHGKVSCLEYVR. Residues 129–149 traverse the membrane as a helical segment; sequence VMCISLFGNYVGAVSFAFFVS. At 150 to 185 the chain is on the extracellular side; the sequence is YGSGAFHKKEQVDKNHIFQFLNDIAVKKVNHTFVEC. Asparagine 179 carries an N-linked (GlcNAc...) asparagine glycan. Residues 186 to 206 form a helical membrane-spanning segment; that stretch reads ICLAIGCNIFVCLAVYFVLSI. Topologically, residues 207 to 211 are cytoplasmic; it reads KDGSG. Residues 212 to 232 form a helical membrane-spanning segment; the sequence is MVFSVFFAVYAFAIAGYEHII. The Extracellular segment spans residues 233-260; it reads ANIYTLNISLMIDTEVSFTQVYFKNLLP. N-linked (GlcNAc...) asparagine glycosylation occurs at asparagine 239. Residues 261-281 form a helical membrane-spanning segment; sequence TLIGNYIAGALVLACPLFFIY. At 282–313 the chain is on the cytoplasmic side; that stretch reads RSYYINYEKMNEPSGGSLRSISIEMKNDGGAT.

The protein belongs to the FNT transporter (TC 1.A.16) family. As to quaternary structure, homopentamer.

It localises to the cell membrane. The protein resides in the vacuole membrane. It catalyses the reaction (S)-lactate(in) + H(+)(in) = (S)-lactate(out) + H(+)(out). It carries out the reaction formate(in) + H(+)(in) = formate(out) + H(+)(out). The enzyme catalyses pyruvate(out) + H(+)(out) = pyruvate(in) + H(+)(in). The catalysed reaction is acetate(out) + H(+)(out) = acetate(in) + H(+)(in). With respect to regulation, inhibited by the Malaria Box compound MMV007839 and its derivatives BH296 and BH267.meta. Its function is as follows. Monocarboxylate-proton symporter that mediates the efflux of the waste product lactate in the intraerythrocytic parasites; active in acidic-to-neutral pH range. Transports L-lactate. The sequence is that of Formate-nitrite transporter from Plasmodium ovale.